The following is an 87-amino-acid chain: Small ribosomal subunit protein bS20 (87 aa).

The disordered stretch occupies residues 1-26 (MANIKSAKKRAVQSEKARKHNASRRS).

Belongs to the bacterial ribosomal protein bS20 family.

In terms of biological role, binds directly to 16S ribosomal RNA. The polypeptide is Small ribosomal subunit protein bS20 (Klebsiella pneumoniae (strain 342)).